The following is a 122-amino-acid chain: Large ribosomal subunit protein uL14 (122 aa).

This sequence belongs to the universal ribosomal protein uL14 family. In terms of assembly, part of the 50S ribosomal subunit. Forms a cluster with proteins L3 and L19. In the 70S ribosome, L14 and L19 interact and together make contacts with the 16S rRNA in bridges B5 and B8.

Functionally, binds to 23S rRNA. Forms part of two intersubunit bridges in the 70S ribosome. This Cupriavidus metallidurans (strain ATCC 43123 / DSM 2839 / NBRC 102507 / CH34) (Ralstonia metallidurans) protein is Large ribosomal subunit protein uL14.